The following is a 248-amino-acid chain: MRFDVVTLFPEMFSALTQWGITGRACEQFLASVHLWNPRDFCSDPRKTVDDRAYGGGPGMVMMVKPLEDTVAGIRASHEAAGIKSGPICLLAPQGERFSQKIATDILSYGNLSFICGRYEAVDQRFVDRNVDLQLSIGDFVLSGGEIPAMAMMDAVIRLIPGALGDGQSATQDSFMNGLLDYPHYTRPEIYENLSVPDVLLGGHHAKIVDWRRQKSLELTFRLRLDLIESARAKGLLTREDEQFLRSL.

Residues Gly117 and 137 to 142 (IGDFVL) each bind S-adenosyl-L-methionine.

Belongs to the RNA methyltransferase TrmD family. As to quaternary structure, homodimer.

It is found in the cytoplasm. It catalyses the reaction guanosine(37) in tRNA + S-adenosyl-L-methionine = N(1)-methylguanosine(37) in tRNA + S-adenosyl-L-homocysteine + H(+). Specifically methylates guanosine-37 in various tRNAs. This is tRNA (guanine-N(1)-)-methyltransferase from Polynucleobacter necessarius subsp. necessarius (strain STIR1).